Here is a 114-residue protein sequence, read N- to C-terminus: uncharacterized protein (114 aa).

One can recognise an HIT domain in the interval 6 to 114 (IFSKIIRREI…GGRPFSWPPG (109 aa)). The short motif at 98–102 (HLHLH) is the Histidine triad motif element.

This is an uncharacterized protein from Synechocystis sp. (strain ATCC 27184 / PCC 6803 / Kazusa).